The sequence spans 536 residues: Lariat debranching enzyme (536 aa).

The a divalent metal cation site is built by C8, H10, D39, and N84. Positions 124–154 are lariat recognition loop; sequence SGIFKSHDYRKGHFECPPYNQQTIRSAYHVR. Residues H174, H226, and H228 each coordinate a divalent metal cation. The disordered stretch occupies residues 388-536; that stretch reads EEGSVRGEYE…YAAEDEDEAK (149 aa). The span at 414-426 shows a compositional bias: polar residues; that stretch reads EYNTDNSGLSSIN. Positions 430 to 441 are enriched in acidic residues; the sequence is IMLDDEGGDEDL. Positions 484–504 are enriched in basic and acidic residues; that stretch reads ELEKSGVNKQVEEKSLNERPL.

It belongs to the lariat debranching enzyme family. The cofactor is Fe(2+). Zn(2+) is required as a cofactor. Mn(2+) serves as cofactor.

It is found in the nucleus. Active in presence of diverse metals including Fe(2+), Zn(2+), Mn(2+). Also activated by Ca(2+). Binds two metal cations in two adjacent alpha and beta metal-binding pockets. In terms of biological role, cleaves the 2'-5' phosphodiester linkage at the branch point of excised lariat intron RNA and converts them into linear molecules that can be subsequently degraded, thereby facilitating ribonucleotide turnover. Linked to its role in pre-mRNA processing mechanism, may also participate in retrovirus replication and have an antiviral cell-intrinsic defense function. The chain is Lariat debranching enzyme (DBR1) from Gallus gallus (Chicken).